The sequence spans 78 residues: DNA gyrase inhibitor YacG (78 aa).

Positions 7, 10, 26, and 30 each coordinate Zn(2+).

It belongs to the DNA gyrase inhibitor YacG family. In terms of assembly, interacts with GyrB. Zn(2+) serves as cofactor.

Inhibits all the catalytic activities of DNA gyrase by preventing its interaction with DNA. Acts by binding directly to the C-terminal domain of GyrB, which probably disrupts DNA binding by the gyrase. In Shewanella piezotolerans (strain WP3 / JCM 13877), this protein is DNA gyrase inhibitor YacG.